A 473-amino-acid chain; its full sequence is 3-isopropylmalate dehydratase large subunit (473 aa).

C351, C414, and C417 together coordinate [4Fe-4S] cluster.

It belongs to the aconitase/IPM isomerase family. LeuC type 1 subfamily. Heterodimer of LeuC and LeuD. [4Fe-4S] cluster serves as cofactor.

It carries out the reaction (2R,3S)-3-isopropylmalate = (2S)-2-isopropylmalate. It participates in amino-acid biosynthesis; L-leucine biosynthesis; L-leucine from 3-methyl-2-oxobutanoate: step 2/4. Its function is as follows. Catalyzes the isomerization between 2-isopropylmalate and 3-isopropylmalate, via the formation of 2-isopropylmaleate. The sequence is that of 3-isopropylmalate dehydratase large subunit from Acidovorax ebreus (strain TPSY) (Diaphorobacter sp. (strain TPSY)).